The sequence spans 554 residues: Nuclear division defective protein 1 (554 aa).

Disordered stretches follow at residues 1–31 (MDRDISYQQNYTSTGATATSSRQPSTDNNAD) and 98–117 (IQQQQQQQQQQQQQQQALGS). Residues 98 to 113 (IQQQQQQQQQQQQQQQ) show a composition bias toward low complexity. The residue at position 319 (T319) is a Phosphothreonine; by CDC28. Disordered stretches follow at residues 410–475 (PTPN…GKKP) and 493–554 (SSSS…FNSQ). Positions 411–427 (TPNCNSLHSTTTGTSAL) are enriched in polar residues. A compositionally biased stretch (low complexity) spans 448-465 (SSSNTVSFKSKSGNNNSK). A compositionally biased stretch (basic residues) spans 466–475 (GRIKKNGKKP). Positions 493–513 (SSSSLSSSLNASSSAGNSNSN) are enriched in low complexity. Positions 515-524 (TKKRASKLKR) are enriched in basic residues. The span at 525-536 (SQSLLSDSGSKS) shows a compositional bias: low complexity. Over residues 539–554 (RKSCNSKSNGNLFNSQ) the composition is skewed to polar residues.

In terms of assembly, forms an activator complex with FKH2. Phosphorylation of Thr-319 by CDC28 is required for the interaction with FKH2 and recruitment to promoters.

It localises to the cytoplasm. The protein localises to the nucleus. Its function is as follows. Transcription activator involved in G2/M transcription through its association with FKH2. The chain is Nuclear division defective protein 1 (NDD1) from Saccharomyces cerevisiae (strain ATCC 204508 / S288c) (Baker's yeast).